The chain runs to 235 residues: Ribosomal RNA small subunit methyltransferase G (235 aa).

S-adenosyl-L-methionine contacts are provided by residues G74, F79, 97–99 (EAT), 125–126 (AE), and R144.

It belongs to the methyltransferase superfamily. RNA methyltransferase RsmG family.

It is found in the cytoplasm. Its function is as follows. Specifically methylates the N7 position of a guanine in 16S rRNA. The protein is Ribosomal RNA small subunit methyltransferase G of Dehalococcoides mccartyi (strain ATCC BAA-2100 / JCM 16839 / KCTC 5957 / BAV1).